A 352-amino-acid chain; its full sequence is MIKVGIVGGTGYTGVELLRLLAQHPEVELTAITSRTEAGMPVAEMFPSLRGRVALKFTTPDEAKLNECDVVFFATPHGVAMAQAKELLANGVKVLDLAADFRLKDVKEFAKWYGMEHNCPEILAEAVYGLPEINRDAIKKARVVGLAGCYPTSVQLGLAPLLSPKSTGGKHLIDGTHIISDSKSGTSGAGRKAEIGTLLSEASDNFKAYSVKGHRHLPEIEQGLKAIAGHDQIGLTFVPHLTPMIRGIHSTLYVRLTEAGKDVDYQKLYENFYKDEPFVDVMPAGSHPETRSVRGSNGIRIAIHRPGGGDTLVILVVEDNLVKGASGQGVQCMNLMFGLPETTGLTQIAVSP.

Cys-149 is an active-site residue.

It belongs to the NAGSA dehydrogenase family. Type 1 subfamily.

The protein localises to the cytoplasm. It carries out the reaction N-acetyl-L-glutamate 5-semialdehyde + phosphate + NADP(+) = N-acetyl-L-glutamyl 5-phosphate + NADPH + H(+). The protein operates within amino-acid biosynthesis; L-arginine biosynthesis; N(2)-acetyl-L-ornithine from L-glutamate: step 3/4. Its function is as follows. Catalyzes the NADPH-dependent reduction of N-acetyl-5-glutamyl phosphate to yield N-acetyl-L-glutamate 5-semialdehyde. The chain is N-acetyl-gamma-glutamyl-phosphate reductase from Polynucleobacter asymbioticus (strain DSM 18221 / CIP 109841 / QLW-P1DMWA-1) (Polynucleobacter necessarius subsp. asymbioticus).